The primary structure comprises 198 residues: Lipid A 4'-phosphatase (198 aa).

The chain crosses the membrane as a helical span at residues 143 to 165 (AGQHTILQVTIGSLIAWGFAYLF).

This sequence belongs to the lipid A LpxF 4'-phosphatase family.

It localises to the cell inner membrane. It participates in bacterial outer membrane biogenesis; LPS lipid A biosynthesis. Its function is as follows. Removes the 4'-phosphate group from tetra- and hexaacylated lipid A species, has no 1-phosphatase or Kdo hydrolase activity. Absence of the 4'-phosphate group renders the bacteria resistant to host-derived cationic antimicrobial peptides (CAMP), allowing it to camouflage itself from the host innate immune response, and plays a critical role in the long-term colonization of the host's stomach. The chain is Lipid A 4'-phosphatase from Helicobacter pylori (strain J99 / ATCC 700824) (Campylobacter pylori J99).